We begin with the raw amino-acid sequence, 432 residues long: Trigger factor (432 aa).

The PPIase FKBP-type domain maps to 161 to 246 (EDRVTIDFTG…LKKVEERELP (86 aa)).

This sequence belongs to the FKBP-type PPIase family. Tig subfamily. Homodimer and monomer. In vivo most of the ribosomes are in complex with monomeric TF. Uncomplexed TF, however, is in a monomer-dimer equilibrium with approximately two thirds of TF existing in a dimeric state.

It is found in the cytoplasm. The catalysed reaction is [protein]-peptidylproline (omega=180) = [protein]-peptidylproline (omega=0). Involved in protein export. Acts as a chaperone by maintaining the newly synthesized protein in an open conformation. Functions as a peptidyl-prolyl cis-trans isomerase. This Escherichia fergusonii (strain ATCC 35469 / DSM 13698 / CCUG 18766 / IAM 14443 / JCM 21226 / LMG 7866 / NBRC 102419 / NCTC 12128 / CDC 0568-73) protein is Trigger factor.